The following is a 388-amino-acid chain: Na(+)/H(+) antiporter NhaA (388 aa).

The next 11 helical transmembrane spans lie at 14-34 (GGII…MGAT), 59-79 (MLLW…GLEV), 95-115 (AFPV…YLAF), 125-145 (GWAI…ALLG), 154-174 (IFLM…IALF), 179-199 (LSIV…LLNL), 219-239 (VLKS…FIPL), 254-274 (VLHP…NAGV), 292-312 (IIAG…WLAL), 328-348 (IMAV…IASL), and 360-380 (WAKL…YSWL).

Belongs to the NhaA Na(+)/H(+) (TC 2.A.33) antiporter family.

It is found in the cell inner membrane. It catalyses the reaction Na(+)(in) + 2 H(+)(out) = Na(+)(out) + 2 H(+)(in). Its function is as follows. Na(+)/H(+) antiporter that extrudes sodium in exchange for external protons. This is Na(+)/H(+) antiporter NhaA from Salmonella choleraesuis (strain SC-B67).